Reading from the N-terminus, the 458-residue chain is Probable mitochondrial chaperone BCS1-B (458 aa).

The Mitochondrial intermembrane segment spans residues 1 to 26 (MENVITNNNKGLPKSILKFIPEPIQP). Residues 27-47 (LFENPFFSAGFGLIGVGSILA) traverse the membrane as a helical segment. At 48-458 (MGRKGFQQAM…INNLNELIKK (411 aa)) the chain is on the mitochondrial matrix side. 248–255 (GPPGTGKS) lines the ATP pocket.

It belongs to the AAA ATPase family. BCS1 subfamily.

The protein localises to the mitochondrion inner membrane. The catalysed reaction is ATP + H2O = ADP + phosphate + H(+). Functionally, chaperone necessary for the assembly of mitochondrial respiratory chain complex III. The protein is Probable mitochondrial chaperone BCS1-B (bcsl1b) of Dictyostelium discoideum (Social amoeba).